A 192-amino-acid polypeptide reads, in one-letter code: MNGIRLFVGLGNPGAQYEDTRHNAGFWWIDQLCAQTASKTTLEAKFFGLSGRLNGHADTWLLKPTTFMNASGRAVAALARFYKIPAEQILVVHDELDLPPGAARLKKGGGHSGHNGLKDIAAQLGTNDFWRLRLGIGHPGDRSAVVNYVLNAPLRDEMQQIAYAMDDSMLVLPQLLEGKFEEAMLKLHTKTK.

Y17 contacts tRNA. H22 (proton acceptor) is an active-site residue. The tRNA site is built by F67, N69, and N115.

Belongs to the PTH family. As to quaternary structure, monomer.

The protein resides in the cytoplasm. The catalysed reaction is an N-acyl-L-alpha-aminoacyl-tRNA + H2O = an N-acyl-L-amino acid + a tRNA + H(+). Hydrolyzes ribosome-free peptidyl-tRNAs (with 1 or more amino acids incorporated), which drop off the ribosome during protein synthesis, or as a result of ribosome stalling. In terms of biological role, catalyzes the release of premature peptidyl moieties from peptidyl-tRNA molecules trapped in stalled 50S ribosomal subunits, and thus maintains levels of free tRNAs and 50S ribosomes. This Methylobacillus flagellatus (strain ATCC 51484 / DSM 6875 / VKM B-1610 / KT) protein is Peptidyl-tRNA hydrolase.